The following is a 286-amino-acid chain: Bifunctional protein FolD (286 aa).

Residues 168–170 (GRG), T195, and V236 contribute to the NADP(+) site.

This sequence belongs to the tetrahydrofolate dehydrogenase/cyclohydrolase family. As to quaternary structure, homodimer.

The enzyme catalyses (6R)-5,10-methylene-5,6,7,8-tetrahydrofolate + NADP(+) = (6R)-5,10-methenyltetrahydrofolate + NADPH. It catalyses the reaction (6R)-5,10-methenyltetrahydrofolate + H2O = (6R)-10-formyltetrahydrofolate + H(+). It functions in the pathway one-carbon metabolism; tetrahydrofolate interconversion. Catalyzes the oxidation of 5,10-methylenetetrahydrofolate to 5,10-methenyltetrahydrofolate and then the hydrolysis of 5,10-methenyltetrahydrofolate to 10-formyltetrahydrofolate. The protein is Bifunctional protein FolD of Mycolicibacterium gilvum (strain PYR-GCK) (Mycobacterium gilvum (strain PYR-GCK)).